The chain runs to 179 residues: Translationally-controlled tumor protein homolog (179 aa).

Residues 1 to 179 (MIIYKDIISG…WKHGLEEMKV (179 aa)) form the TCTP domain.

Belongs to the TCTP family.

It localises to the cytoplasm. The protein resides in the cytoskeleton. Involved in protein synthesis. Involved in microtubule stabilization. This Aspergillus fumigatus (strain ATCC MYA-4609 / CBS 101355 / FGSC A1100 / Af293) (Neosartorya fumigata) protein is Translationally-controlled tumor protein homolog.